We begin with the raw amino-acid sequence, 177 residues long: Peptide deformylase 2 (177 aa).

Cys-99 and His-141 together coordinate Fe cation. Residue Glu-142 is part of the active site. Fe cation is bound at residue His-145.

Belongs to the polypeptide deformylase family. Fe(2+) is required as a cofactor.

The catalysed reaction is N-terminal N-formyl-L-methionyl-[peptide] + H2O = N-terminal L-methionyl-[peptide] + formate. Functionally, removes the formyl group from the N-terminal Met of newly synthesized proteins. Requires at least a dipeptide for an efficient rate of reaction. N-terminal L-methionine is a prerequisite for activity but the enzyme has broad specificity at other positions. This chain is Peptide deformylase 2, found in Ralstonia nicotianae (strain ATCC BAA-1114 / GMI1000) (Ralstonia solanacearum).